Here is a 589-residue protein sequence, read N- to C-terminus: MSVSVHENRKSRTSTGSMNISLYHKLSHSECVLNHLNTMRKQRLFTDMTLWAGNRSFPCHRAVLAACSPYFEAMFSNGLRESLDNTVNFHNSLHPEVLELLLDFAYSSKIIINEENAESLLEAGDMLQFHDVRDAACEFLEKNLYPSNCLGMMILSDAHQCQRLYELSLRMCLSNFATLHNTEDFSSLSKDMLLDLISSDELEIEDEQVVFNAVLHWVKEDLDKRKDYFPELLRNVRLALLPSELLKEAVVCEDLIIADERSKLIMDEAVQCKKKILQNDGVVTSLCAKPRKAGHTLLILGGQTFMCDKIYQLDHKAKEIIPKADLPSPRKEFSACAIGCKVYITGGRGSENGVSKDVWVYDTIHEEWSKSAPMLIARFGHGSAELDNCLYVVGGHTAVAGVFPASPSVSLKQVEKYDPLPNKWTMMAPLRDGVSNAAVVSAKLKLFVFGGTSIHRDRVSKVQFYDPHENRWSIKAECPQPWRYTAAAVLGSQIFIMGGDTEFTAASAYRFDCETNLWTRIGDMTAKRMSCHALASGNKVYVVGGYFGTQRCKTLDCYDPTSDSWNSITSVPYSLIPTAFVSTWKHLPA.

The region spanning 46–114 (TDMTLWAGNR…AYSSKIIINE (69 aa)) is the BTB domain. In terms of domain architecture, BACK spans 149-250 (CLGMMILSDA…LPSELLKEAV (102 aa)). Kelch repeat units lie at residues 296–340 (TLLI…AIGC), 341–388 (KVYI…ELDN), 389–444 (CLYV…SAKL), 446–492 (LFVF…VLGS), 494–538 (IFIM…ASGN), and 539–585 (KVYV…STWK).

As to quaternary structure, component of the BCR(KLHL25) E3 ubiquitin ligase complex, at least composed of cul3, klhl25 and rbx1.

The protein operates within protein modification; protein ubiquitination. Substrate-specific adapter of a BCR (BTB-CUL3-RBX1) E3 ubiquitin ligase complex involved in various processes, such as translation homeostasis and lipid synthesis. The BCR(KLHL25) ubiquitin ligase complex acts by mediating ubiquitination of hypophosphorylated eif4ebp1 (4E-BP1): ubiquitination and subsequent degradation of hypophosphorylated EIF4EBP1 (4E-BP1) probably serves as a homeostatic mechanism to maintain translation and prevent eIF4E inhibition when eIF4E levels are low. The BCR(KLHL25) complex also acts as a regulator of lipid synthesis by mediating ubiquitination and degradation of ACLY, thereby inhibiting lipid synthesis. The chain is Kelch-like protein 25 from Xenopus laevis (African clawed frog).